A 237-amino-acid chain; its full sequence is Uracil-DNA glycosylase (237 aa).

Residue Asp77 is the Proton acceptor of the active site.

It belongs to the uracil-DNA glycosylase (UDG) superfamily. UNG family.

The protein localises to the cytoplasm. It carries out the reaction Hydrolyzes single-stranded DNA or mismatched double-stranded DNA and polynucleotides, releasing free uracil.. In terms of biological role, excises uracil residues from the DNA which can arise as a result of misincorporation of dUMP residues by DNA polymerase or due to deamination of cytosine. The protein is Uracil-DNA glycosylase of Acinetobacter baumannii (strain ACICU).